The sequence spans 475 residues: Cysteine--tRNA ligase (475 aa).

Cysteine 28 is a Zn(2+) binding site. The short motif at 30–40 is the 'HIGH' region element; that stretch reads PTVYDYAHIGN. 3 residues coordinate Zn(2+): cysteine 213, histidine 238, and glutamate 242. A 'KMSKS' region motif is present at residues 270 to 274; that stretch reads KMSKS. An ATP-binding site is contributed by lysine 273.

This sequence belongs to the class-I aminoacyl-tRNA synthetase family. In terms of assembly, monomer. It depends on Zn(2+) as a cofactor.

It localises to the cytoplasm. The catalysed reaction is tRNA(Cys) + L-cysteine + ATP = L-cysteinyl-tRNA(Cys) + AMP + diphosphate. The polypeptide is Cysteine--tRNA ligase (cysS) (Chlamydia muridarum (strain MoPn / Nigg)).